A 320-amino-acid polypeptide reads, in one-letter code: Cilia- and flagella-associated protein 77 (320 aa).

The tract at residues Met-1–Gln-27 is disordered. Positions Gln-17–Gln-27 are enriched in polar residues.

This sequence belongs to the CFAP77 family. Microtubule inner protein component of sperm flagellar doublet microtubules. In terms of tissue distribution, expressed in airway epithelial cells.

It localises to the cytoplasm. It is found in the cytoskeleton. The protein resides in the cilium axoneme. Its subcellular location is the flagellum axoneme. In terms of biological role, microtubule inner protein (MIP) part of the dynein-decorated doublet microtubules (DMTs) in cilia axoneme, which is required for motile cilia beating. The sequence is that of Cilia- and flagella-associated protein 77 from Homo sapiens (Human).